Here is a 327-residue protein sequence, read N- to C-terminus: Peroxidase 15 (327 aa).

The signal sequence occupies residues 1 to 23 (MASFSPLLAMALAIFIFSSHSNA). Glutamine 24 carries the pyrrolidone carboxylic acid modification. Intrachain disulfides connect cysteine 34-cysteine 115, cysteine 67-cysteine 72, cysteine 121-cysteine 323, and cysteine 200-cysteine 232. N-linked (GlcNAc...) asparagine glycosylation is present at asparagine 36. Histidine 65 serves as the catalytic Proton acceptor. Residues aspartate 66, valine 69, glycine 71, aspartate 73, and serine 75 each contribute to the Ca(2+) site. N-linked (GlcNAc...) asparagine glycans are attached at residues asparagine 81, asparagine 96, and asparagine 159. Proline 163 lines the substrate pocket. 2 N-linked (GlcNAc...) asparagine glycosylation sites follow: asparagine 168 and asparagine 171. Histidine 193 provides a ligand contact to heme b. Threonine 194 provides a ligand contact to Ca(2+). Asparagine 209 and asparagine 221 each carry an N-linked (GlcNAc...) asparagine glycan. 3 residues coordinate Ca(2+): aspartate 245, threonine 248, and aspartate 253. 2 N-linked (GlcNAc...) asparagine glycosylation sites follow: asparagine 287 and asparagine 291.

This sequence belongs to the peroxidase family. Classical plant (class III) peroxidase subfamily. It depends on Ca(2+) as a cofactor. Heme b is required as a cofactor.

It localises to the secreted. The catalysed reaction is 2 a phenolic donor + H2O2 = 2 a phenolic radical donor + 2 H2O. Its function is as follows. Removal of H(2)O(2), oxidation of toxic reductants, biosynthesis and degradation of lignin, suberization, auxin catabolism, response to environmental stresses such as wounding, pathogen attack and oxidative stress. These functions might be dependent on each isozyme/isoform in each plant tissue. This chain is Peroxidase 15, found in Ipomoea batatas (Sweet potato).